The following is a 233-amino-acid chain: 3-dehydroquinate dehydratase (233 aa).

3-dehydroquinate is bound by residues 34–36 (ELR) and Arg64. The Proton donor/acceptor role is filled by His118. The active-site Schiff-base intermediate with substrate is Lys145. Positions 185, 205, and 209 each coordinate 3-dehydroquinate.

Belongs to the type-I 3-dehydroquinase family. Homodimer.

It carries out the reaction 3-dehydroquinate = 3-dehydroshikimate + H2O. It participates in metabolic intermediate biosynthesis; chorismate biosynthesis; chorismate from D-erythrose 4-phosphate and phosphoenolpyruvate: step 3/7. Functionally, involved in the third step of the chorismate pathway, which leads to the biosynthesis of aromatic amino acids. Catalyzes the cis-dehydration of 3-dehydroquinate (DHQ) and introduces the first double bond of the aromatic ring to yield 3-dehydroshikimate. In Coxiella burnetii (strain CbuG_Q212) (Coxiella burnetii (strain Q212)), this protein is 3-dehydroquinate dehydratase.